Consider the following 3511-residue polypeptide: Unconventional myosin-XV (3511 aa).

Disordered regions lie at residues 1–44, 574–690, 712–1030, and 1105–1135; these read MADE…TPKI, KKPI…SLRQ, FAEP…PNKN, and VSSF…PQAC. The span at 622–634 shows a compositional bias: polar residues; sequence SQPQARNNNNSHG. Over residues 654-672 the composition is skewed to pro residues; the sequence is PPMPAPSPSPASPLTPPFS. Low complexity predominate over residues 769 to 792; that stretch reads PSLRSLPGQGYHSPLGPLSPQLSL. The segment covering 797–807 has biased composition (pro residues); that stretch reads FQPPFPPPPRR. A Myosin motor domain is found at 1206 to 1883; that stretch reads DGVEDMTQLE…LHQLLESMRE (678 aa). Position 1299 to 1306 (1299 to 1306) interacts with ATP; it reads GESGSGKT. Residues 1307–1334 adopt a coiled-coil conformation; sequence EATKLILRCLAAMNQRRDVMQQIKILEA. An actin-binding region spans residues 1776–1783; the sequence is FVRCLKPN. Positions 1872-2013 are neck or regulatory domain; it reads EHLHQLLESM…SSGPRVAVVR (142 aa). 2 IQ domains span residues 1886 to 1908 and 1909 to 1938; these read QNRA…HFRS and LRRK…SLLK. The tail stretch occupies residues 2014-3511; it reads APRLQAEPCV…TLPPSEITLL (1498 aa). One can recognise a MyTH4 1 domain in the interval 2049–2195; sequence MLTVPLKMPL…PTQLEWTAIQ (147 aa). Disordered regions lie at residues 2330–2359, 2392–2425, 2460–2509, 2565–2584, and 2629–2648; these read SHKE…GEST, YRMK…PIPG, PLSA…SVAK, KQPP…GKVF, and RPCM…PPED. Over residues 2337 to 2351 the composition is skewed to polar residues; that stretch reads NGETEAQRWTSNRQA. A compositionally biased stretch (gly residues) spans 2395 to 2406; sequence KGGGQPGGGGGS. The span at 2410–2420 shows a compositional bias: basic and acidic residues; that stretch reads DTSRRPPEPKL. Positions 2573 to 2584 are enriched in basic and acidic residues; it reads PEARRTDGGKVF. The SH3 domain occupies 2848-2934; the sequence is KDSDYVVAVR…PSELVQPAAA (87 aa). The tract at residues 2964–2984 is disordered; it reads EVGRRREGPPVRARSADSGED. Over residues 2965 to 2980 the composition is skewed to basic and acidic residues; sequence VGRRREGPPVRARSAD. Residues 3031-3185 enclose the MyTH4 2 domain; that stretch reads FTKVPIQESL…PSNMELRAML (155 aa). In terms of domain architecture, FERM spans 3190-3511; it reads SKRQLFLLPG…TLPPSEITLL (322 aa).

The protein belongs to the TRAFAC class myosin-kinesin ATPase superfamily. Myosin family. In terms of assembly, interacts with the third PDZ domain of WHRN which is necessary for localization of WHRN to stereocilium tips. Interacts with FASLG. Interacts with EPS8. In the developing inner ear, expressed in cochlea and vestibular apparatus. Expression appears to be restricted to cochlear neurosensory cells and upper epithelial layer of macula saccula. Also expressed in macula utriculi and cristae ampullaris of the semicircular canals. In adult cochlear hair cells, highest expression in stereocilia and apical body.

It localises to the cell projection. It is found in the stereocilium. The protein resides in the cytoplasm. The protein localises to the cytoskeleton. Myosins are actin-based motor molecules with ATPase activity. Unconventional myosins serve in intracellular movements. Their highly divergent tails are presumed to bind to membranous compartments, which would be moved relative to actin filaments. Required for the arrangement of stereocilia in mature hair bundles. The protein is Unconventional myosin-XV (Myo15a) of Mus musculus (Mouse).